We begin with the raw amino-acid sequence, 356 residues long: UDP-3-O-acylglucosamine N-acyltransferase (356 aa).

His-242 serves as the catalytic Proton acceptor.

The protein belongs to the transferase hexapeptide repeat family. LpxD subfamily. In terms of assembly, homotrimer.

It carries out the reaction a UDP-3-O-[(3R)-3-hydroxyacyl]-alpha-D-glucosamine + a (3R)-hydroxyacyl-[ACP] = a UDP-2-N,3-O-bis[(3R)-3-hydroxyacyl]-alpha-D-glucosamine + holo-[ACP] + H(+). The protein operates within bacterial outer membrane biogenesis; LPS lipid A biosynthesis. In terms of biological role, catalyzes the N-acylation of UDP-3-O-acylglucosamine using 3-hydroxyacyl-ACP as the acyl donor. Is involved in the biosynthesis of lipid A, a phosphorylated glycolipid that anchors the lipopolysaccharide to the outer membrane of the cell. In Acinetobacter baylyi (strain ATCC 33305 / BD413 / ADP1), this protein is UDP-3-O-acylglucosamine N-acyltransferase.